A 110-amino-acid chain; its full sequence is UPF0145 protein (110 aa).

It belongs to the UPF0145 family.

The chain is UPF0145 protein from Listeria welshimeri.